The chain runs to 368 residues: P2X receptor C (368 aa).

Over 1-24 (MLDWDSILAYNTIKVVRIRDRRLG) the chain is Cytoplasmic. Residues 25–45 (ILHLIFMIAIISYVVIYSAII) traverse the membrane as a helical segment. The Lumenal segment spans residues 46-368 (KKGYLSIEEP…DKLYHNIEAL (323 aa)). The pore-forming motif stretch occupies residues 282–295 (RHAIRLIFIQTGVI).

It belongs to the P2X receptor family.

The protein resides in the contractile vacuole membrane. P2X receptors are ligand-gated ion channels that play a role in intracellular calcium signaling. ATP does not evoke inward currents in p2xC. Not essential for osmoregulation. This chain is P2X receptor C (p2xC), found in Dictyostelium discoideum (Social amoeba).